We begin with the raw amino-acid sequence, 292 residues long: Alpha-soluble NSF attachment protein (292 aa).

It belongs to the SNAP family.

The protein localises to the cytoplasmic vesicle. It localises to the membrane. Functionally, required for vesicular transport between the endoplasmic reticulum and the Golgi apparatus. Also between the endosome and phagosome. This is Alpha-soluble NSF attachment protein from Drosophila melanogaster (Fruit fly).